The primary structure comprises 1447 residues: Baculoviral IAP repeat-containing protein 1b (1447 aa).

3 BIR repeats span residues 60–127 (EAKR…CEFL), 159–227 (EEAR…CEFL), and 278–345 (EELR…CVFL). Zn(2+) contacts are provided by C315, C318, H335, and C342. Positions 508–802 (SVMCVEGEAG…EFLAAVRLTE (295 aa)) constitute an NACHT domain. Position 520 (K520) interacts with ATP.

In terms of assembly, component of the NLRC4 inflammasome, at least composed of NLRC4, caspase-1 (CASP1) and some NAIP protein. Interacts with S.typhimurium (Salmonella) PrgJ and B.thailandensis BsaK.

Functionally, sensor component of the NLRC4 inflammasome that specifically recognizes and binds type III secretion system (T3SS) rod proteins such as S.typhimurium (Salmonella) PrgJ and B.thailandensis BsaK from pathogenic bacteria. Association of pathogenic bacteria proteins drives in turn drive assembly and activation of the NLRC4 inflammasome, promoting caspase-1 activation, cytokine production and macrophage pyroptosis. The NLRC4 inflammasome is activated as part of the innate immune response to a range of intracellular bacteria. The NLRC4 inflammasome senses Gram-negative bacteria such as L.pneumophila and P.aeruginosa, enteric pathogens S.typhimurium (Salmonella) and S.flexneri. Prevents motor-neuron apoptosis induced by a variety of signals. The chain is Baculoviral IAP repeat-containing protein 1b (Naip2) from Mus musculus (Mouse).